The primary structure comprises 278 residues: UPF0761 membrane protein CBU_1578 (278 aa).

The next 7 membrane-spanning stretches (helical) occupy residues 38 to 58 (LLALVPLTIVAFTLLSFVPAF), 68 to 88 (LIWENFVPTSAGMVAAYLSQL), 92 to 112 (VTGLSIINIFFLGIVALLLMY), 134 to 154 (FLIYFMVLLLSPFLLGAVMLL), 177 to 197 (LLFVLPYVLIFITFTLFNWVL), 207 to 227 (AVIGGLVTTVLFELAKFAFTV), and 244 to 264 (VIPIFLVWLYVSWTIILLGAV).

The protein belongs to the UPF0761 family.

It localises to the cell inner membrane. This Coxiella burnetii (strain RSA 493 / Nine Mile phase I) protein is UPF0761 membrane protein CBU_1578.